We begin with the raw amino-acid sequence, 384 residues long: Intraflagellar transport protein 46 homolog (384 aa).

Disordered regions lie at residues valine 52–tyrosine 151 and serine 358–aspartate 384. Basic and acidic residues predominate over residues glutamate 87–proline 99. Over residues aspartate 110–proline 138 the composition is skewed to acidic residues. Polar residues predominate over residues serine 358 to alanine 374.

The protein belongs to the IFT46 family.

The protein resides in the cytoplasm. The protein localises to the cytoskeleton. It localises to the cilium basal body. Its subcellular location is the cell projection. It is found in the cilium. Forms part of a complex involved in intraflagellar transport (IFT), the bi-directional movement of particles required for the assembly, maintenance and functioning of primary cilia. Plays a role in early embryonic development. This Danio rerio (Zebrafish) protein is Intraflagellar transport protein 46 homolog.